The primary structure comprises 126 residues: Holo-[acyl-carrier-protein] synthase (126 aa).

The Mg(2+) site is built by Asp-8 and Glu-57.

It belongs to the P-Pant transferase superfamily. AcpS family. Mg(2+) serves as cofactor.

Its subcellular location is the cytoplasm. It catalyses the reaction apo-[ACP] + CoA = holo-[ACP] + adenosine 3',5'-bisphosphate + H(+). Functionally, transfers the 4'-phosphopantetheine moiety from coenzyme A to a Ser of acyl-carrier-protein. The polypeptide is Holo-[acyl-carrier-protein] synthase (Geobacter metallireducens (strain ATCC 53774 / DSM 7210 / GS-15)).